Reading from the N-terminus, the 79-residue chain is Conotoxin 8 (79 aa).

The first 22 residues, Met1–Ala22, serve as a signal peptide directing secretion. Positions Asp23–Arg47 are excised as a propeptide. Intrachain disulfides connect Cys49/Cys62, Cys56/Cys67, and Cys61/Cys77.

This sequence belongs to the conotoxin O1 superfamily. In terms of tissue distribution, expressed by the venom duct.

Its subcellular location is the secreted. This Conus vexillum (Flag cone) protein is Conotoxin 8.